A 715-amino-acid polypeptide reads, in one-letter code: Polyribonucleotide nucleotidyltransferase (715 aa).

Residues Asp497 and Asp503 each coordinate Mg(2+). Positions Pro564–Ile623 constitute a KH domain. Residues Gly633 to Leu701 form the S1 motif domain.

The protein belongs to the polyribonucleotide nucleotidyltransferase family. The cofactor is Mg(2+).

The protein localises to the cytoplasm. The enzyme catalyses RNA(n+1) + phosphate = RNA(n) + a ribonucleoside 5'-diphosphate. Its function is as follows. Involved in mRNA degradation. Catalyzes the phosphorolysis of single-stranded polyribonucleotides processively in the 3'- to 5'-direction. This Crocosphaera subtropica (strain ATCC 51142 / BH68) (Cyanothece sp. (strain ATCC 51142)) protein is Polyribonucleotide nucleotidyltransferase.